The chain runs to 504 residues: DnaJ homolog subfamily C member 3 (504 aa).

A signal peptide spans 1–31; that stretch reads MVAPGSVGSRLGAVFPFLLVLVDLQYEGAEC. TPR repeat units follow at residues 37–70, 72–104, 105–138, 154–187, 188–221, 222–255, 268–301, 306–339, and 340–373; these read VEKHLELGKKLLAAGQLADALSQFHAAVDGDPDN, IAYYRRATVFLAMGKSKAALPDLTKVIALKMDF, TAARLQRGHLLLKQGKLDEAEDDFKKVLKSNPSE, MQRLRSQALDAFDGADYTAAITFLDKILEVCVWD, AELRELRAECFIKEGEPRKAISDLKAASKLKSDN, TEAFYKISTLYYQLGDHELSLSEVRECLKLDQDH, LNKLIESAEELIRDGRYTDATSKYESVMKTEPSV, VRSKERICHCFSKDEKPVEAIRICSEVLQMEPDN, and VNALKDRAEAYLIEEMYDEAIQDYEAAQEHNEND. A disulfide bridge connects residues C248 and C258. Position 274 is a phosphoserine (S274). A disulfide bridge connects residues C313 and C329. Positions 375-393 are flexible linker; it reads QIREGLEKAQRLLKQSQKR. The J domain occupies 394–462; that stretch reads DYYKILGVKR…EMRKKFDDGE (69 aa). The interval 451 to 481 is disordered; sequence DPEMRKKFDDGEDPLDAESQQGGGGNPFHRS.

In terms of assembly, interacts with EIF2AK4/GCN2; this interaction occurs under endoplasmic reticulum (ER) stress, hypothermic and amino acid starving stress conditions and inhibits EIF2AK4/GCN2 kinase activity. Interacts with EIF2AK3. Interacts with EIF2AK2. Forms a trimeric complex with DNAJB1 and HSPA8. Interacts with THAP12. As to expression, widely expressed, with high level in the liver.

Its subcellular location is the endoplasmic reticulum. Its function is as follows. Involved in the unfolded protein response (UPR) during endoplasmic reticulum (ER) stress. Acts as a negative regulator of the EIF2AK4/GCN2 kinase activity by preventing the phosphorylation of eIF-2-alpha at 'Ser-52' and hence attenuating general protein synthesis under ER stress, hypothermic and amino acid starving stress conditions. Co-chaperone of HSPA8/HSC70, it stimulates its ATPase activity. May inhibit both the autophosphorylation of EIF2AK2/PKR and the ability of EIF2AK2 to catalyze phosphorylation of the EIF2A. May inhibit EIF2AK3/PERK activity. This Mus musculus (Mouse) protein is DnaJ homolog subfamily C member 3 (Dnajc3).